The chain runs to 229 residues: DNA repair protein RecO (229 aa).

The protein belongs to the RecO family.

Its function is as follows. Involved in DNA repair and RecF pathway recombination. This is DNA repair protein RecO from Legionella pneumophila (strain Lens).